The chain runs to 150 residues: Small ribosomal subunit protein eS19 (150 aa).

It belongs to the eukaryotic ribosomal protein eS19 family. As to quaternary structure, part of the 30S ribosomal subunit.

In terms of biological role, may be involved in maturation of the 30S ribosomal subunit. The polypeptide is Small ribosomal subunit protein eS19 (Pyrococcus horikoshii (strain ATCC 700860 / DSM 12428 / JCM 9974 / NBRC 100139 / OT-3)).